We begin with the raw amino-acid sequence, 950 residues long: Leucine--tRNA ligase (950 aa).

A 'HIGH' region motif is present at residues 66–77 (PYPSGAGLHVGH). The 'KMSKS' region motif lies at 721-725 (KIGKS). Lys-724 lines the ATP pocket.

This sequence belongs to the class-I aminoacyl-tRNA synthetase family.

The protein resides in the cytoplasm. It catalyses the reaction tRNA(Leu) + L-leucine + ATP = L-leucyl-tRNA(Leu) + AMP + diphosphate. This chain is Leucine--tRNA ligase, found in Nocardia farcinica (strain IFM 10152).